The sequence spans 167 residues: NADH-quinone oxidoreductase subunit B (167 aa).

[4Fe-4S] cluster is bound by residues Cys-40, Cys-41, Cys-105, and Cys-135.

This sequence belongs to the complex I 20 kDa subunit family. In terms of assembly, NDH-1 is composed of 14 different subunits. Subunits NuoB, C, D, E, F, and G constitute the peripheral sector of the complex. [4Fe-4S] cluster serves as cofactor.

Its subcellular location is the cell inner membrane. It catalyses the reaction a quinone + NADH + 5 H(+)(in) = a quinol + NAD(+) + 4 H(+)(out). Functionally, NDH-1 shuttles electrons from NADH, via FMN and iron-sulfur (Fe-S) centers, to quinones in the respiratory chain. The immediate electron acceptor for the enzyme in this species is believed to be ubiquinone. Couples the redox reaction to proton translocation (for every two electrons transferred, four hydrogen ions are translocated across the cytoplasmic membrane), and thus conserves the redox energy in a proton gradient. This Magnetococcus marinus (strain ATCC BAA-1437 / JCM 17883 / MC-1) protein is NADH-quinone oxidoreductase subunit B.